The chain runs to 832 residues: Protein monoglycylase TTLL8 (832 aa).

Pro residues predominate over residues 1–13 (MSCPPTPNPPFRP). 2 disordered regions span residues 1–84 (MSCP…QDLS) and 277–304 (GKSK…KLPS). Composition is skewed to basic and acidic residues over residues 46-59 (QLRE…ERKK), 66-75 (DGDHKEENKL), and 280-299 (KKEE…ENPD). One can recognise a TTL domain in the interval 271 to 624 (YCSKVKGKSK…RKLDRNCDIG (354 aa)). ATP-binding positions include Lys-397, 403–404 (RG), 435–438 (QKYI), 448–450 (KFD), and 492–493 (CN). Arg-403 contributes to the a protein binding site. Ser-495 is a binding site for L-glutamate. Mg(2+) contacts are provided by Asp-570, Glu-583, and Asn-585. An ATP-binding site is contributed by Glu-583.

Requires Mg(2+) as cofactor. Highly expressed in testis. Expressed in brain, heart, kidney, liver, lung, muscle, spleen and trachea. Expressed in sperm flagellum. In the brain, specifically expressed in ependymal cilia.

The protein localises to the cytoplasm. It is found in the cytoskeleton. It localises to the cell projection. The protein resides in the cilium. Its subcellular location is the cilium axoneme. The protein localises to the flagellum axoneme. It catalyses the reaction L-glutamyl-[protein] + glycine + ATP = glycyl-L-glutamyl-[protein] + ADP + phosphate + H(+). Functionally, monoglycylase which modifies both tubulin and non-tubulin proteins, adding a single glycine on the gamma-carboxyl groups of specific glutamate residues to generate monoglycine side chains within the C-terminal tail of target proteins. Not involved in elongation step of the polyglycylation reaction. Preferentially monoglycylates alpha-tubulin over beta-tubulin. Together with TTLL3, mediates microtubule glycylation of primary and motile cilia, which is essential for their stability and maintenance. Together with TTLL3, glycylates sperm flagella which regulates axonemal dynein motor activity, thereby controlling flagellar beat, directional sperm swimming and male fertility. Monoglycylates non-tubulin proteins such as ANP32A, ANP32B, SET, NCL and NAP1. The protein is Protein monoglycylase TTLL8 of Mus musculus (Mouse).